The primary structure comprises 203 residues: tRNA (pseudouridine(54)-N(1))-methyltransferase (203 aa).

2 residues coordinate S-adenosyl-L-methionine: L135 and G156.

The protein belongs to the methyltransferase superfamily. TrmY family. In terms of assembly, homodimer.

The protein localises to the cytoplasm. The enzyme catalyses pseudouridine(54) in tRNA + S-adenosyl-L-methionine = N(1)-methylpseudouridine(54) in tRNA + S-adenosyl-L-homocysteine + H(+). Specifically catalyzes the N1-methylation of pseudouridine at position 54 (Psi54) in tRNAs. This is tRNA (pseudouridine(54)-N(1))-methyltransferase from Thermococcus onnurineus (strain NA1).